Consider the following 150-residue polypeptide: Macrodomain Ter protein (150 aa).

This sequence belongs to the MatP family. Homodimer.

Its subcellular location is the cytoplasm. Its function is as follows. Required for spatial organization of the terminus region of the chromosome (Ter macrodomain) during the cell cycle. Prevents early segregation of duplicated Ter macrodomains during cell division. Binds specifically to matS, which is a 13 bp signature motif repeated within the Ter macrodomain. The chain is Macrodomain Ter protein from Klebsiella pneumoniae (strain 342).